A 281-amino-acid polypeptide reads, in one-letter code: Small ribosomal subunit protein uS2 (281 aa).

Residues 233-281 (NKAEGEAAEQPMAAWEKELLTNEAPAEASAEAAAPAAAEGETAEAPKAE) form a disordered region. Over residues 255–275 (EAPAEASAEAAAPAAAEGETA) the composition is skewed to low complexity.

This sequence belongs to the universal ribosomal protein uS2 family.

The protein is Small ribosomal subunit protein uS2 of Bifidobacterium longum (strain DJO10A).